The following is a 200-amino-acid chain: ATP-dependent Clp protease proteolytic subunit 2 (200 aa).

Ser100 (nucleophile) is an active-site residue.

The protein belongs to the peptidase S14 family. As to quaternary structure, fourteen ClpP subunits assemble into 2 heptameric rings which stack back to back to give a disk-like structure with a central cavity, resembling the structure of eukaryotic proteasomes.

It is found in the cytoplasm. The enzyme catalyses Hydrolysis of proteins to small peptides in the presence of ATP and magnesium. alpha-casein is the usual test substrate. In the absence of ATP, only oligopeptides shorter than five residues are hydrolyzed (such as succinyl-Leu-Tyr-|-NHMec, and Leu-Tyr-Leu-|-Tyr-Trp, in which cleavage of the -Tyr-|-Leu- and -Tyr-|-Trp bonds also occurs).. In terms of biological role, cleaves peptides in various proteins in a process that requires ATP hydrolysis. Has a chymotrypsin-like activity. Plays a major role in the degradation of misfolded proteins. In Streptomyces avermitilis (strain ATCC 31267 / DSM 46492 / JCM 5070 / NBRC 14893 / NCIMB 12804 / NRRL 8165 / MA-4680), this protein is ATP-dependent Clp protease proteolytic subunit 2.